We begin with the raw amino-acid sequence, 336 residues long: tRNA N6-adenosine threonylcarbamoyltransferase (336 aa).

Positions 111 and 115 each coordinate Fe cation. Substrate contacts are provided by residues 134–138, Asp167, Gly180, Asp184, and Asn272; that span reads VVSGG. Asp300 lines the Fe cation pocket.

The protein belongs to the KAE1 / TsaD family. Requires Fe(2+) as cofactor.

It localises to the cytoplasm. It catalyses the reaction L-threonylcarbamoyladenylate + adenosine(37) in tRNA = N(6)-L-threonylcarbamoyladenosine(37) in tRNA + AMP + H(+). Functionally, required for the formation of a threonylcarbamoyl group on adenosine at position 37 (t(6)A37) in tRNAs that read codons beginning with adenine. Is involved in the transfer of the threonylcarbamoyl moiety of threonylcarbamoyl-AMP (TC-AMP) to the N6 group of A37, together with TsaE and TsaB. TsaD likely plays a direct catalytic role in this reaction. In Caldicellulosiruptor saccharolyticus (strain ATCC 43494 / DSM 8903 / Tp8T 6331), this protein is tRNA N6-adenosine threonylcarbamoyltransferase.